The primary structure comprises 91 residues: Small ribosomal subunit protein uS19 (91 aa).

This sequence belongs to the universal ribosomal protein uS19 family.

Its function is as follows. Protein S19 forms a complex with S13 that binds strongly to the 16S ribosomal RNA. The protein is Small ribosomal subunit protein uS19 of Paraburkholderia phymatum (strain DSM 17167 / CIP 108236 / LMG 21445 / STM815) (Burkholderia phymatum).